A 104-amino-acid polypeptide reads, in one-letter code: L-rhamnose mutarotase (104 aa).

Tyrosine 18 provides a ligand contact to substrate. Residue histidine 22 is the Proton donor of the active site. Substrate is bound by residues tyrosine 41 and 76–77 (WW).

The protein belongs to the rhamnose mutarotase family. Homodimer.

It is found in the cytoplasm. It catalyses the reaction alpha-L-rhamnose = beta-L-rhamnose. The protein operates within carbohydrate metabolism; L-rhamnose metabolism. In terms of biological role, involved in the anomeric conversion of L-rhamnose. This is L-rhamnose mutarotase from Pectobacterium carotovorum subsp. carotovorum (strain PC1).